A 512-amino-acid chain; its full sequence is Chromatin assembly factor 1 subunit B (512 aa).

4 WD repeats span residues 16–56 (DDHT…SSTK), 65–105 (RHTQ…TTLA), 126–165 (SMGS…LLTQ), and 168–207 (DHSH…KNPK). A compositionally biased stretch (polar residues) spans 239–257 (DESSGISEPIETSNNNESP). Positions 239 to 261 (DESSGISEPIETSNNNESPVSKH) are disordered. 2 WD repeats span residues 373 to 413 (SFSN…PFYR) and 417 to 458 (LHYS…VKSQ). Residues 459–512 (HKISLPEKRSASPSSIDDSQDNTAGGPATTTLIPRKVESSKVSKKRIAPTPVYP) form a disordered region. Residues Ser-468, Ser-470, and Ser-473 each carry the phosphoserine modification. Residues 469–490 (ASPSSIDDSQDNTAGGPATTTL) are compositionally biased toward polar residues.

This sequence belongs to the WD repeat HIR1 family. Component of chromatin assembly factor 1 (CAF-1), composed of pcf1, pcf2 and pcf3. Interacts with pcn1/PCNA during S-phase. Interacts with swi6 at the G1/S-phase transition and early S-phase, but not in the G2 phase. The CAF-1 complex interacts with histone H3-H4 dimers.

The protein localises to the cytoplasm. Its subcellular location is the nucleus. Acts as a component of the histone chaperone complex chromatin assembly factor 1 (CAF-1), which assembles histone octamers onto DNA during replication and repair. CAF-1 performs the first step of the nucleosome assembly process, bringing newly synthesized histones H3 and H4 to replicating DNA; histones H2A/H2B can bind to this chromatin precursor subsequent to DNA replication to complete the histone octamer. Plays a role in the maintenance of heterochromatin. This is Chromatin assembly factor 1 subunit B from Schizosaccharomyces pombe (strain 972 / ATCC 24843) (Fission yeast).